The following is a 28-amino-acid chain: U-actitoxin-Ate1 (28 aa).

A signal peptide spans 1 to 15; sequence MSLILIFFAFTVLKS. Cysteine 20 and cysteine 26 are oxidised to a cystine.

In terms of assembly, monomer in solution. May be N-glycosylated at Asn-22. Activity with this modification has not be tested. In terms of tissue distribution, highly expressed in the tentacles. Weakly expressed in acrorhagi and mesenteric filaments.

It is found in the secreted. The protein localises to the nematocyst. In terms of biological role, probable toxin expected to be employed in prey capture and/or defense against predators (based on its abundance in tentacles). Has only a weak affinity for lipid membranes. Shows moderate cytotoxic activity against breast cancer cell lines (MCF-7 and MDA-MB-231). The sequence is that of U-actitoxin-Ate1 from Actinia tenebrosa (Australian red waratah sea anemone).